We begin with the raw amino-acid sequence, 259 residues long: Oxaloacetate tautomerase FMP41, mitochondrial (259 aa).

3 residues coordinate Mg(2+): Glu87, Glu89, and Asp121.

The protein belongs to the FAH family. Mg(2+) serves as cofactor. Requires Mn(2+) as cofactor.

The protein localises to the mitochondrion. It carries out the reaction oxaloacetate = enol-oxaloacetate. Its function is as follows. Tautomerase that converts enol-oxaloacetate, a strong inhibitor of succinate dehydrogenase, to the physiological keto form of oxaloacetate. The sequence is that of Oxaloacetate tautomerase FMP41, mitochondrial from Saccharomyces cerevisiae (strain ATCC 204508 / S288c) (Baker's yeast).